The chain runs to 95 residues: UPF0235 protein Sama_2480 (95 aa).

It belongs to the UPF0235 family.

The sequence is that of UPF0235 protein Sama_2480 from Shewanella amazonensis (strain ATCC BAA-1098 / SB2B).